We begin with the raw amino-acid sequence, 229 residues long: 2,3-bisphosphoglycerate-dependent phosphoglycerate mutase (229 aa).

Residues R8–N15, T21–G22, R60, E87–Y90, K98, R114–R115, and G183–N184 each bind substrate. Residue H9 is the Tele-phosphohistidine intermediate of the active site. E87 serves as the catalytic Proton donor/acceptor.

The protein belongs to the phosphoglycerate mutase family. BPG-dependent PGAM subfamily. Homodimer.

The enzyme catalyses (2R)-2-phosphoglycerate = (2R)-3-phosphoglycerate. Its pathway is carbohydrate degradation; glycolysis; pyruvate from D-glyceraldehyde 3-phosphate: step 3/5. Catalyzes the interconversion of 2-phosphoglycerate and 3-phosphoglycerate. In Polynucleobacter necessarius subsp. necessarius (strain STIR1), this protein is 2,3-bisphosphoglycerate-dependent phosphoglycerate mutase.